The following is a 549-amino-acid chain: MDKNNNNNLRLILAIALSFLFIALYSYFFQEPNKTTTETTKQETTNNHTATSPTASNTITQDFSVTQTIPQESLLSTISFEHAKIEIDSLGRIKQVYLKDKKYLTPKEKGFLEHVSHLFSSKENSQPSLKELPLLAADKLKPLEVRFLDPTLNNKAFNTPYSASKTTLGPNEQLVLTQDLGTLSIIKTLTFYDDLHYDLKIAFKSPNNLIPSYVITNGYRPVADLDSYTFSGVLLENTDKKIEKIEDKDAKEIKRFSNTLFLSSVDRYFTTLLFTKDPQGFEALIDSEIGTKNPLGFISLKNEANLHGYIGPKDYRSLKAISPMLTDVIEYGLITFFAKGVFVLLDYLYQFVGNWGWAIILLTIIVRIILYPLSYKGMVSMQKLKELAPKMKELQEKYKGEPQKLQAHMMQLYKKHGANPLGGCLPLILQIPVFFAIYRVLYNAVELKSSEWVLWIHDLSIMDPYFILPLLMGASMYWHQSVTPNTMTDPMQAKIFKLLPLLFTIFLITFPAGLVLYWTTHNILSVLQQLIINKVLENKKRAHAQNIKE.

Residues 9–29 traverse the membrane as a helical segment; that stretch reads LRLILAIALSFLFIALYSYFF. Over residues 37–51 the composition is skewed to low complexity; that stretch reads TETTKQETTNNHTAT. Positions 37-56 are disordered; it reads TETTKQETTNNHTATSPTAS. Helical transmembrane passes span 328–348, 351–371, 417–437, 452–472, and 498–518; these read VIEY…LDYL, FVGN…IILY, GANP…FFAI, WVLW…PLLM, and LLPL…VLYW.

This sequence belongs to the OXA1/ALB3/YidC family. Type 1 subfamily. In terms of assembly, interacts with the Sec translocase complex via SecD. Specifically interacts with transmembrane segments of nascent integral membrane proteins during membrane integration.

It is found in the cell inner membrane. Its function is as follows. Required for the insertion and/or proper folding and/or complex formation of integral membrane proteins into the membrane. Involved in integration of membrane proteins that insert both dependently and independently of the Sec translocase complex, as well as at least some lipoproteins. Aids folding of multispanning membrane proteins. This is Membrane protein insertase YidC from Helicobacter pylori (strain J99 / ATCC 700824) (Campylobacter pylori J99).